The following is a 396-amino-acid chain: Elongation factor Tu (396 aa).

Positions 10-206 (KPHVNIGTIG…AVDEYIPDPV (197 aa)) constitute a tr-type G domain. Residues 19–26 (GHVDHGKT) form a G1 region. 19 to 26 (GHVDHGKT) provides a ligand contact to GTP. Mg(2+) is bound at residue threonine 26. The segment at 62 to 66 (GITIN) is G2. The segment at 83 to 86 (DAPG) is G3. GTP is bound by residues 83–87 (DAPGH) and 138–141 (NKSD). The tract at residues 138–141 (NKSD) is G4. A G5 region spans residues 176–178 (SGL).

The protein belongs to the TRAFAC class translation factor GTPase superfamily. Classic translation factor GTPase family. EF-Tu/EF-1A subfamily. In terms of assembly, monomer.

It is found in the cytoplasm. It catalyses the reaction GTP + H2O = GDP + phosphate + H(+). Its function is as follows. GTP hydrolase that promotes the GTP-dependent binding of aminoacyl-tRNA to the A-site of ribosomes during protein biosynthesis. This is Elongation factor Tu from Micrococcus luteus (strain ATCC 4698 / DSM 20030 / JCM 1464 / CCM 169 / CCUG 5858 / IAM 1056 / NBRC 3333 / NCIMB 9278 / NCTC 2665 / VKM Ac-2230) (Micrococcus lysodeikticus).